Consider the following 323-residue polypeptide: Aldo-keto reductase family 1 member C4 (323 aa).

NADP(+) is bound by residues 20–24 (GFGTY) and D50. Y55 serves as the catalytic Proton donor. H117 is a substrate binding site. NADP(+) contacts are provided by residues 166–167 (SN), Q190, 216–221 (HSALGT), and 270–280 (KSYNEQRIREN).

Belongs to the aldo/keto reductase family. In terms of assembly, monomer.

It localises to the cytoplasm. The protein localises to the cytosol. It catalyses the reaction chlordecone alcohol + NADP(+) = chlordecone + NADPH + H(+). The enzyme catalyses a 3alpha-hydroxysteroid + NADP(+) = a 3-oxosteroid + NADPH + H(+). It carries out the reaction a 3alpha-hydroxysteroid + NAD(+) = a 3-oxosteroid + NADH + H(+). The catalysed reaction is 5alpha-androstane-3alpha,17beta-diol + NADP(+) = 17beta-hydroxy-5alpha-androstan-3-one + NADPH + H(+). It catalyses the reaction 5alpha-androstane-3beta,17beta-diol + NADP(+) = 17beta-hydroxy-5alpha-androstan-3-one + NADPH + H(+). The enzyme catalyses 5alpha-androstane-3alpha,17beta-diol + NAD(+) = 17beta-hydroxy-5alpha-androstan-3-one + NADH + H(+). It carries out the reaction 17beta-estradiol + NADP(+) = estrone + NADPH + H(+). The catalysed reaction is 17beta-estradiol + NAD(+) = estrone + NADH + H(+). It catalyses the reaction (20S)-hydroxypregn-4-en-3-one + NADP(+) = progesterone + NADPH + H(+). The enzyme catalyses (20S)-hydroxypregn-4-en-3-one + NAD(+) = progesterone + NADH + H(+). It carries out the reaction androsterone + NADP(+) = 5alpha-androstan-3,17-dione + NADPH + H(+). The catalysed reaction is testosterone + NADP(+) = androst-4-ene-3,17-dione + NADPH + H(+). It catalyses the reaction testosterone + NAD(+) = androst-4-ene-3,17-dione + NADH + H(+). The enzyme catalyses 3alpha-hydroxy-5alpha-androstane 17-O-(beta-D-glucuronate) + NADP(+) = 5alpha-dihydrotestosterone 17-O-(beta-D-glucuronate) + NADPH + H(+). It carries out the reaction (3beta,5alpha,17beta)-3-hydroxy-androstan-17-yl sulfate + NADP(+) = 5alpha-dihydrotestosterone sulfate + NADPH + H(+). The catalysed reaction is 5alpha-androstane-3alpha,17beta-diol + NAD(+) = androsterone + NADH + H(+). Its pathway is steroid metabolism. In terms of biological role, cytosolic aldo-keto reductase that catalyzes the NADH and NADPH-dependent reduction of ketosteroids to hydroxysteroids. Liver specific enzyme that acts as an NAD(P)(H)-dependent 3-, 17- and 20-ketosteroid reductase on the steroid nucleus and side chain. Displays the ability to catalyze both oxidation and reduction in vitro, but most probably acts as a reductase in vivo since the oxidase activity measured in vitro is inhibited by physiological concentration of NADPH. Acts preferentially as a 3-alpha-hydroxysteroid dehydrogenase (HSD) with a subsidiary 3-beta-HSD activity. Catalyzes efficiently the transformation of the potent androgen 5-alpha-dihydrotestosterone (5alpha-DHT or 17beta-hydroxy-5alpha-androstan-3-one) into the less active form, 5-alpha-androstan-3-alpha,17-beta-diol (3-alpha-diol). Catalyzes the reduction of estrone into 17beta-estradiol but with low efficiency. Metabolizes a broad spectrum of natural and synthetic therapeutic steroid and plays an important role in metabolism of androgens, estrogens, progestereone and conjugated steroids. Catalyzes the biotransformation of the pesticide chlordecone (kepone) to its corresponding alcohol leading to increased biliary excretion of the pesticide and concomitant reduction of its neurotoxicity since bile is the major excretory route. This is Aldo-keto reductase family 1 member C4 (AKR1C4) from Macaca fascicularis (Crab-eating macaque).